We begin with the raw amino-acid sequence, 345 residues long: N-acetyl-gamma-glutamyl-phosphate reductase (345 aa).

Cys153 is an active-site residue.

Belongs to the NAGSA dehydrogenase family. Type 1 subfamily.

The protein localises to the cytoplasm. The enzyme catalyses N-acetyl-L-glutamate 5-semialdehyde + phosphate + NADP(+) = N-acetyl-L-glutamyl 5-phosphate + NADPH + H(+). The protein operates within amino-acid biosynthesis; L-arginine biosynthesis; N(2)-acetyl-L-ornithine from L-glutamate: step 3/4. Functionally, catalyzes the NADPH-dependent reduction of N-acetyl-5-glutamyl phosphate to yield N-acetyl-L-glutamate 5-semialdehyde. The sequence is that of N-acetyl-gamma-glutamyl-phosphate reductase from Methylacidiphilum infernorum (isolate V4) (Methylokorus infernorum (strain V4)).